Consider the following 228-residue polypeptide: RNA chaperone ProQ (228 aa).

Residues 105-178 (EAKARVQAQR…REEQHTPVSD (74 aa)) are disordered. 2 stretches are compositionally biased toward basic and acidic residues: residues 117–136 (QQAK…DAPR) and 146–173 (RRKE…EEQH).

This sequence belongs to the ProQ family.

It localises to the cytoplasm. In terms of biological role, RNA chaperone with significant RNA binding, RNA strand exchange and RNA duplexing activities. May regulate ProP activity through an RNA-based, post-transcriptional mechanism. The chain is RNA chaperone ProQ from Citrobacter koseri (strain ATCC BAA-895 / CDC 4225-83 / SGSC4696).